A 312-amino-acid chain; its full sequence is Zinc transporter ZitB (312 aa).

The next 6 membrane-spanning stretches (helical) occupy residues 16-36 (LLIA…GGWL), 40-60 (LALL…FIAL), 81-101 (LTTL…ILIV), 117-137 (TPML…FWIL), 153-173 (LHVL…IVIL), and 177-197 (WTPI…RNAW).

The protein belongs to the cation diffusion facilitator (CDF) transporter (TC 2.A.4) family. SLC30A subfamily.

The protein localises to the cell inner membrane. Involved in zinc efflux across the cytoplasmic membrane, thus reducing zinc accumulation in the cytoplasm and rendering bacteria more resistant to zinc. It may contribute to zinc homeostasis at low concentrations of zinc. In Yersinia pseudotuberculosis serotype I (strain IP32953), this protein is Zinc transporter ZitB.